Reading from the N-terminus, the 507-residue chain is Arabinose import ATP-binding protein AraG (507 aa).

ABC transporter domains are found at residues leucine 14 to arginine 249 and arginine 249 to threonine 505. Residue glycine 46–serine 53 participates in ATP binding.

Belongs to the ABC transporter superfamily. Arabinose importer (TC 3.A.1.2.2) family. As to quaternary structure, the complex is composed of two ATP-binding proteins (AraG), two transmembrane proteins (AraH) and a solute-binding protein (AraF).

It localises to the cell inner membrane. The catalysed reaction is L-arabinose(out) + ATP + H2O = L-arabinose(in) + ADP + phosphate + H(+). Functionally, part of the ABC transporter complex AraFGH involved in arabinose import. Responsible for energy coupling to the transport system. The sequence is that of Arabinose import ATP-binding protein AraG from Pseudomonas syringae pv. tomato (strain ATCC BAA-871 / DC3000).